Here is a 294-residue protein sequence, read N- to C-terminus: Cytidine deaminase (294 aa).

2 CMP/dCMP-type deaminase domains span residues 48–168 and 186–294; these read DEDA…FGPK and LTGD…VLLA. Position 89–91 (89–91) interacts with substrate; sequence NME. H102 is a binding site for Zn(2+). The active-site Proton donor is the E104. Residues C129 and C132 each contribute to the Zn(2+) site.

This sequence belongs to the cytidine and deoxycytidylate deaminase family. As to quaternary structure, homodimer. The cofactor is Zn(2+).

It carries out the reaction cytidine + H2O + H(+) = uridine + NH4(+). The catalysed reaction is 2'-deoxycytidine + H2O + H(+) = 2'-deoxyuridine + NH4(+). This enzyme scavenges exogenous and endogenous cytidine and 2'-deoxycytidine for UMP synthesis. The sequence is that of Cytidine deaminase from Escherichia coli (strain K12).